Consider the following 62-residue polypeptide: Large ribosomal subunit protein uL30 (62 aa).

Belongs to the universal ribosomal protein uL30 family. In terms of assembly, part of the 50S ribosomal subunit.

The chain is Large ribosomal subunit protein uL30 from Prosthecochloris aestuarii (strain DSM 271 / SK 413).